Consider the following 335-residue polypeptide: Foldase protein PrsA (335 aa).

Residues 1 to 22 (MRSAKKLLSVLCLGVFILTFTA) form the signal peptide. A lipid anchor (N-palmitoyl cysteine) is attached at Cys23. Cys23 carries the S-diacylglycerol cysteine lipid modification. Residues 194-285 (PNTMNVSHIL…FGYHIIKINS (92 aa)) enclose the PpiC domain.

The protein belongs to the PrsA family.

It is found in the cell membrane. It catalyses the reaction [protein]-peptidylproline (omega=180) = [protein]-peptidylproline (omega=0). In terms of biological role, plays a major role in protein secretion by helping the post-translocational extracellular folding of several secreted proteins. The polypeptide is Foldase protein PrsA (Clostridium botulinum (strain Loch Maree / Type A3)).